A 122-amino-acid chain; its full sequence is Histone H2B.2 (122 aa).

Positions 1 to 10 (MAPKKAPAAT) are enriched in low complexity. The tract at residues 1-28 (MAPKKAPAATTEKKVKKAPTTEKKNKKK) is disordered. A N,N,N-trimethylalanine modification is found at A2. N6-acetyllysine is present on residues K5 and K42. Residue K116 forms a Glycyl lysine isopeptide (Lys-Gly) (interchain with G-Cter in ubiquitin) linkage.

This sequence belongs to the histone H2B family. In terms of assembly, the nucleosome is a histone octamer containing two molecules each of H2A, H2B, H3 and H4 assembled in one H3-H4 heterotetramer and two H2A-H2B heterodimers. The octamer wraps approximately 147 bp of DNA. Post-translationally, acetylation occurs almost exclusively in the MAC. In terms of processing, monoubiquitination to form H2BK115ub1 gives a specific tag for epigenetic transcriptional activation and is also prerequisite for H3K4me and H3K79me formation.

Its subcellular location is the nucleus. It localises to the chromosome. Its function is as follows. Core component of nucleosome. Nucleosomes wrap and compact DNA into chromatin, limiting DNA accessibility to the cellular machineries which require DNA as a template. Histones thereby play a central role in transcription regulation, DNA repair, DNA replication and chromosomal stability. DNA accessibility is regulated via a complex set of post-translational modifications of histones, also called histone code, and nucleosome remodeling. In Tetrahymena thermophila (strain SB210), this protein is Histone H2B.2 (HTB2).